Consider the following 52-residue polypeptide: Large ribosomal subunit protein eL39 (52 aa).

This sequence belongs to the eukaryotic ribosomal protein eL39 family.

The protein is Large ribosomal subunit protein eL39 (RPL39) of Tetrahymena thermophila (strain SB210).